Here is a 261-residue protein sequence, read N- to C-terminus: RING-H2 finger protein ATL58 (261 aa).

A helical membrane pass occupies residues Ala-25 to Ile-45. The segment at Cys-100–Arg-142 adopts an RING-type; atypical zinc-finger fold. 2 disordered regions span residues Arg-149–His-227 and Met-241–Gly-261. A compositionally biased stretch (polar residues) spans Ser-194–Asn-221.

This sequence belongs to the RING-type zinc finger family. ATL subfamily.

The protein localises to the membrane. The catalysed reaction is S-ubiquitinyl-[E2 ubiquitin-conjugating enzyme]-L-cysteine + [acceptor protein]-L-lysine = [E2 ubiquitin-conjugating enzyme]-L-cysteine + N(6)-ubiquitinyl-[acceptor protein]-L-lysine.. It participates in protein modification; protein ubiquitination. The polypeptide is RING-H2 finger protein ATL58 (ATL58) (Arabidopsis thaliana (Mouse-ear cress)).